A 145-amino-acid polypeptide reads, in one-letter code: Superoxide dismutase [Mn/Fe] (145 aa).

Positions 10 and 64 each coordinate Fe(3+). Mn(2+) is bound by residues His10 and His64.

The protein belongs to the iron/manganese superoxide dismutase family. It depends on Mn(2+) as a cofactor. The cofactor is Fe(3+).

It catalyses the reaction 2 superoxide + 2 H(+) = H2O2 + O2. Destroys superoxide anion radicals which are normally produced within the cells and which are toxic to biological systems. Catalyzes the dismutation of superoxide anion radicals into O2 and H2O2 by successive reduction and oxidation of the transition metal ion at the active site. The polypeptide is Superoxide dismutase [Mn/Fe] (sodA) (Streptococcus iniae (Streptococcus shiloi)).